The primary structure comprises 512 residues: Cytochrome P450 4d1 (512 aa).

Residues Glu316 and Cys456 each coordinate heme.

It belongs to the cytochrome P450 family. The cofactor is heme.

It localises to the endoplasmic reticulum membrane. The protein resides in the microsome membrane. In terms of biological role, involved in the metabolism of insect hormones and in the breakdown of synthetic insecticides. This is Cytochrome P450 4d1 (Cyp4d1) from Drosophila melanogaster (Fruit fly).